The sequence spans 154 residues: Putative antiporter subunit mnhG2 (154 aa).

The next 3 membrane-spanning stretches (helical) occupy residues 11-31, 51-71, and 72-92; these read IASILIFLGSIIALISAIGIV, VLLTVVGVLIYFIVNSGFFSV, and RLLLSLVFINLTSPVGMHLIS.

Belongs to the CPA3 antiporters (TC 2.A.63) subunit G family. In terms of assembly, may form a heterooligomeric complex that consists of seven subunits: mnhA2, mnhB2, mnhC2, mnhD2, mnhE2, mnhF2 and mnhG2.

The protein resides in the cell membrane. This chain is Putative antiporter subunit mnhG2 (mnhG2), found in Staphylococcus epidermidis (strain ATCC 35984 / DSM 28319 / BCRC 17069 / CCUG 31568 / BM 3577 / RP62A).